Reading from the N-terminus, the 325-residue chain is Aminotransferase tasG (325 aa).

G35 serves as a coordination point for substrate. Pyridoxal 5'-phosphate is bound by residues 89 to 90 (TW), N143, Y174, and 203 to 205 (SFA). N143 contacts substrate. An N6-(pyridoxal phosphate)lysine modification is found at K206. R214 provides a ligand contact to pyridoxal 5'-phosphate.

Belongs to the class-I pyridoxal-phosphate-dependent aminotransferase family. In terms of assembly, homodimer. Pyridoxal 5'-phosphate serves as cofactor.

It participates in secondary metabolite biosynthesis. Aminotransferase; part of the gene cluster that mediates the biosynthesis of the tetramic acids Sch210971 and Sch210972, potential anti-HIV fungal natural product that contain a decalin core. The PKS module of tasS together with the enoylreductase tasC catalyze the formation of the polyketide unit which is then conjugated to 4-hydroxyl-4-methyl glutamate (HMG) by the condensation domain of the tasS NRPS module. One unique structural feature of Sch210971 and Sch210972 is the tetramic acid motif proposed to be derived from the non-proteinogenic amino acid HMG, by a Dieckmann-type condensation catalyzed by the reductase domain of tasS. The aldolase tasA catalyzes the aldol condensation of 2 molecules of pyruvic acid to yield the intermediate 4-hydroxyl-4-methyl-2-oxoglutarate (HMOG), which can then be stereoselectively transaminated, may be by tasG, to form HMG. The Diels-Alderase tas3 then uses the Dieckmann product of tasS as substrate and catalyzes the Diels-Alder cycloaddition to form the decalin ring of Sch210971 and Sch210972. The protein is Aminotransferase tasG of Hapsidospora irregularis.